A 268-amino-acid chain; its full sequence is Imidazole glycerol phosphate synthase subunit HisF (268 aa).

Residues Asp12 and Asp131 contribute to the active site.

This sequence belongs to the HisA/HisF family. As to quaternary structure, heterodimer of HisH and HisF.

Its subcellular location is the cytoplasm. It carries out the reaction 5-[(5-phospho-1-deoxy-D-ribulos-1-ylimino)methylamino]-1-(5-phospho-beta-D-ribosyl)imidazole-4-carboxamide + L-glutamine = D-erythro-1-(imidazol-4-yl)glycerol 3-phosphate + 5-amino-1-(5-phospho-beta-D-ribosyl)imidazole-4-carboxamide + L-glutamate + H(+). It participates in amino-acid biosynthesis; L-histidine biosynthesis; L-histidine from 5-phospho-alpha-D-ribose 1-diphosphate: step 5/9. Functionally, IGPS catalyzes the conversion of PRFAR and glutamine to IGP, AICAR and glutamate. The HisF subunit catalyzes the cyclization activity that produces IGP and AICAR from PRFAR using the ammonia provided by the HisH subunit. The protein is Imidazole glycerol phosphate synthase subunit HisF of Methanocorpusculum labreanum (strain ATCC 43576 / DSM 4855 / Z).